The chain runs to 432 residues: Mitochondrial distribution and morphology protein 12 (432 aa).

Residues 1–432 (MSIEVDWRAA…VFPSFWTFLI (432 aa)) form the SMP-LTD domain. Disordered regions lie at residues 182–273 (WTDP…PRMR) and 354–377 (QQEA…PKRQ). Low complexity predominate over residues 214–234 (TSNPTSRPSTSSTLPSHPSAS). Composition is skewed to basic and acidic residues over residues 243–253 (TGKEHGSLAED) and 355–364 (QEARGQDDRP).

It belongs to the MDM12 family. As to quaternary structure, component of the ER-mitochondria encounter structure (ERMES) or MDM complex, composed of mmm1, mdm10, mdm12 and mdm34. A mmm1 homodimer associates with one molecule of mdm12 on each side in a pairwise head-to-tail manner, and the SMP-LTD domains of mmm1 and mdm12 generate a continuous hydrophobic tunnel for phospholipid trafficking.

It is found in the mitochondrion outer membrane. The protein resides in the endoplasmic reticulum membrane. In terms of biological role, component of the ERMES/MDM complex, which serves as a molecular tether to connect the endoplasmic reticulum (ER) and mitochondria. Components of this complex are involved in the control of mitochondrial shape and protein biogenesis, and function in nonvesicular lipid trafficking between the ER and mitochondria. Mdm12 is required for the interaction of the ER-resident membrane protein mmm1 and the outer mitochondrial membrane-resident beta-barrel protein mdm10. The mdm12-mmm1 subcomplex functions in the major beta-barrel assembly pathway that is responsible for biogenesis of all mitochondrial outer membrane beta-barrel proteins, and acts in a late step after the SAM complex. The mdm10-mdm12-mmm1 subcomplex further acts in the TOM40-specific pathway after the action of the mdm12-mmm1 complex. Essential for establishing and maintaining the structure of mitochondria and maintenance of mtDNA nucleoids. The polypeptide is Mitochondrial distribution and morphology protein 12 (Aspergillus oryzae (strain ATCC 42149 / RIB 40) (Yellow koji mold)).